The primary structure comprises 418 residues: Gamma-glutamyl phosphate reductase (418 aa).

It belongs to the gamma-glutamyl phosphate reductase family.

It localises to the cytoplasm. It catalyses the reaction L-glutamate 5-semialdehyde + phosphate + NADP(+) = L-glutamyl 5-phosphate + NADPH + H(+). The protein operates within amino-acid biosynthesis; L-proline biosynthesis; L-glutamate 5-semialdehyde from L-glutamate: step 2/2. Functionally, catalyzes the NADPH-dependent reduction of L-glutamate 5-phosphate into L-glutamate 5-semialdehyde and phosphate. The product spontaneously undergoes cyclization to form 1-pyrroline-5-carboxylate. The chain is Gamma-glutamyl phosphate reductase from Dechloromonas aromatica (strain RCB).